Reading from the N-terminus, the 123-residue chain is Holo-[acyl-carrier-protein] synthase (123 aa).

Mg(2+) contacts are provided by D8 and E55.

The protein belongs to the P-Pant transferase superfamily. AcpS family. Requires Mg(2+) as cofactor.

The protein resides in the cytoplasm. It catalyses the reaction apo-[ACP] + CoA = holo-[ACP] + adenosine 3',5'-bisphosphate + H(+). In terms of biological role, transfers the 4'-phosphopantetheine moiety from coenzyme A to a Ser of acyl-carrier-protein. The chain is Holo-[acyl-carrier-protein] synthase from Solidesulfovibrio magneticus (strain ATCC 700980 / DSM 13731 / RS-1) (Desulfovibrio magneticus).